Here is a 437-residue protein sequence, read N- to C-terminus: O-methyltransferase elcB (437 aa).

Residue Asp269 participates in S-adenosyl-L-methionine binding. Residue His319 is the Proton acceptor of the active site.

Belongs to the class I-like SAM-binding methyltransferase superfamily. Cation-independent O-methyltransferase family. COMT subfamily.

The protein operates within secondary metabolite biosynthesis. In terms of biological role, O-methyltransferase; part of the gene cluster that mediates the biosynthesis of elsinochrome C, a perelyenequinone phytotoxin structurally similar to cercosporin. The first step of elsinochrome C biosynthesis is performed by the polyketide synthase elcA which catalyzes the formation of nor-toralactone. The starter unit acyltransferase (SAT) domain of elcA initiates polyketide extension by the selective utilization of acetyl-CoA, which is elongated to the heptaketide in the beta-ketoacyl synthase (KS) domain by successive condensations with six malonyl units introduced by the malonyl acyltransferase (MAT) domain. The product template (PT) domain catalyzes C4-C9 and C2-C11 aldol cyclizations and dehydrations to a trihydroxynaphthalene, which is thought to be delivered to the thioesterase (TE) domain for product release. The bifunctional enzyme elcB then methylates nor-toralactone to toralactone before conducting an unusual oxidative aromatic ring opening. The next step in perylenequinone biosynthesis is an O-methylation at the nascent OH-6 of the elcB product performed by the O-methyltransferase elcD. The oxidative coupling of the two monomeric naphthol units in perylenequinone biosynthesis is catalyzed by the FAD-dependent monooxygenase elcE and the multicopper oxidase elcG. ElcG might catalyze the first intermolecular coupling in a regio- and stereo-selective manner via a phenol radical coupling mechanism and the elcE could forge the second C-C bond intramolecularly via a hydride transfer mechanism. The fasciclin domain-containing protein elcF might also play a role duting this step. The last piece of the puzzle in the biosynthesis of elsinochrome C is the additional annulation by enolate coupling to afford the dihydrobenzo(ghi)perylenequinone system, catalyzed by the FAD-dependent monooxygenase elcH. In Phaeosphaeria nodorum (strain SN15 / ATCC MYA-4574 / FGSC 10173) (Glume blotch fungus), this protein is O-methyltransferase elcB.